The following is a 1006-amino-acid chain: Pleckstrin homology domain-containing family G member 5 (1006 aa).

3 disordered regions span residues 1 to 71 (MHYD…HTDD), 148 to 198 (PAKP…DILA), and 212 to 242 (EASI…GDSW). Residues 36–45 (DLEEEEEESS) show a composition bias toward acidic residues. Basic and acidic residues-rich tracts occupy residues 151–165 (PGDE…KDSK) and 183–194 (ERVDAQSRRESL). Positions 224-242 (SSCSLPSGSSGSTNTGDSW) are enriched in low complexity. Residues 336–528 (HQQEAVWELL…ERFIHHVNAC (193 aa)) form the DH domain. The 101-residue stretch at 584-684 (QLLLEGSLRM…WVDTIYNAQN (101 aa)) folds into the PH domain. Disordered stretches follow at residues 690–754 (RAQE…ASDG), 768–820 (DTLS…SAYG), and 837–863 (AELV…RRTP). Over residues 704–726 (LEEEEDEQEEEEEEEEEEEEGED) the composition is skewed to acidic residues. Composition is skewed to polar residues over residues 727-754 (SGTS…ASDG) and 769-785 (TLSS…SQSD). Residue threonine 729 is modified to Phosphothreonine. Serine 734 bears the Phosphoserine mark. The segment covering 786–803 (ETSLSTTASSATPTSELL) has biased composition (low complexity). Positions 847 to 856 (PRVPSPPPSP) are enriched in pro residues. Residues serine 851, serine 876, and serine 881 each carry the phosphoserine modification. Residues 950-979 (AGSHRKRCGDLPSGASPRVQPEPPPGVSAQ) form a disordered region.

In terms of assembly, interacts with GIPC1/synectin and RHOA. As to expression, predominantly expressed in the peripheral nervous system and brain. Highest expression is observed in heart, lung, kidney, testis and moderate expression is present in spleen, pancreas, skeletal muscle, ovary and liver. Weakly expressed in glioblastoma (GBM) cell lines.

The protein resides in the cytoplasm. It is found in the perinuclear region. It localises to the cell membrane. Its subcellular location is the cell junction. The protein localises to the cell projection. The protein resides in the lamellipodium. Its function is as follows. Functions as a guanine exchange factor (GEF) for RAB26 and thus regulates autophagy of synaptic vesicles in axon terminal of motoneurons. Involved in the control of neuronal cell differentiation. Plays a role in angiogenesis through regulation of endothelial cells chemotaxis. Also affects the migration, adhesion, and matrix/bone degradation in macrophages and osteoclasts. In Homo sapiens (Human), this protein is Pleckstrin homology domain-containing family G member 5 (PLEKHG5).